The primary structure comprises 274 residues: Rhamnulose-1-phosphate aldolase (274 aa).

The active site involves glutamate 117. Zn(2+) is bound by residues histidine 141, histidine 143, and histidine 212.

It belongs to the aldolase class II family. RhaD subfamily. Homotetramer. Zn(2+) serves as cofactor.

It is found in the cytoplasm. The catalysed reaction is L-rhamnulose 1-phosphate = (S)-lactaldehyde + dihydroxyacetone phosphate. It functions in the pathway carbohydrate degradation; L-rhamnose degradation; glycerone phosphate from L-rhamnose: step 3/3. Functionally, catalyzes the reversible cleavage of L-rhamnulose-1-phosphate to dihydroxyacetone phosphate (DHAP) and L-lactaldehyde. In Pectobacterium carotovorum subsp. carotovorum (strain PC1), this protein is Rhamnulose-1-phosphate aldolase.